The following is a 434-amino-acid chain: Chaperone SurA (434 aa).

Positions 1-22 are cleaved as a signal peptide; sequence MKPSKHLIFALFALAISQPTMA. PpiC domains are found at residues 173 to 274 and 283 to 383; these read DVEY…KIMD and IEEV…QLEE.

Its subcellular location is the periplasm. It carries out the reaction [protein]-peptidylproline (omega=180) = [protein]-peptidylproline (omega=0). In terms of biological role, chaperone involved in the correct folding and assembly of outer membrane proteins. Recognizes specific patterns of aromatic residues and the orientation of their side chains, which are found more frequently in integral outer membrane proteins. May act in both early periplasmic and late outer membrane-associated steps of protein maturation. This chain is Chaperone SurA, found in Shewanella oneidensis (strain ATCC 700550 / JCM 31522 / CIP 106686 / LMG 19005 / NCIMB 14063 / MR-1).